We begin with the raw amino-acid sequence, 2179 residues long: Genome polyprotein (2179 aa).

Residues 1–20 (MGAQVSTQKSGSHENQNILT) are disordered. Residue glycine 2 is the site of N-myristoyl glycine; by host attachment. Over 2 to 1491 (GAQVSTQKSG…AMNQASMIIN (1490 aa)) the chain is Cytoplasmic. The amphipathic alpha-helix stretch occupies residues 564 to 584 (ALTEGLGDELEEVIVEKTKQT). Catalysis depends on for protease 2A activity residues histidine 876 and aspartate 894. 2 residues coordinate Zn(2+): cysteine 911 and cysteine 913. Residue cysteine 965 is the For protease 2A activity of the active site. Positions 971 and 973 each coordinate Zn(2+). Residues 1101–1173 (NDGWFRKFND…HISNPTQEKR (73 aa)) are membrane-binding. Residues 1101 to 1239 (NDGWFRKFND…TPGSGKSLTT (139 aa)) form an oligomerization region. Positions 1122 to 1126 (ANKIS) are RNA-binding. In terms of domain architecture, SF3 helicase spans 1205 to 1361 (KNKMVNYMQF…TTYTKNGKLN (157 aa)). Residues cysteine 1369, cysteine 1372, cysteine 1381, and cysteine 1386 each contribute to the Zn(2+) site. The C4-type zinc finger occupies 1369–1386 (CKDCHQPSNFKKCCPLVC). An RNA-binding region spans residues 1413–1420 (DFKSKMQI). An oligomerization region spans residues 1424–1429 (LETLFQ). An intramembrane segment occupies 1492 to 1507 (TILMFVSTLGIVYVIY). The Cytoplasmic segment spans residues 1508–2179 (KLFAQTQGPY…VLRRRWLDLF (672 aa)). Tyrosine 1517 carries the post-translational modification O-(5'-phospho-RNA)-tyrosine. A Peptidase C3 domain is found at 1538–1715 (GPNTEFALSL…FSAQLKKQYF (178 aa)). Residues histidine 1577, glutamate 1608, and cysteine 1683 each act as for protease 3C activity in the active site. One can recognise a RdRp catalytic domain in the interval 1946–2060 (GHLMAFDYSN…SYPYELDPQV (115 aa)). Mg(2+) is bound by residues aspartate 1952 and aspartate 2046.

This sequence belongs to the picornaviruses polyprotein family. As to quaternary structure, interacts with capsid protein VP1 and capsid protein VP3 to form heterotrimeric protomers. Interacts with capsid protein VP0, and capsid protein VP3 to form heterotrimeric protomers. Five protomers subsequently associate to form pentamers which serve as building blocks for the capsid. Interacts with capsid protein VP2, capsid protein VP3 and capsid protein VP4 following cleavage of capsid protein VP0. Interacts with host ICAM1. In terms of assembly, interacts with capsid protein VP1 and capsid protein VP3 in the mature capsid. As to quaternary structure, interacts with capsid protein VP0 and capsid protein VP1 to form heterotrimeric protomers. Five protomers subsequently associate to form pentamers which serve as building blocks for the capsid. Interacts with capsid protein VP4 in the mature capsid. Interacts with protein 2C; this interaction may be important for virion morphogenesis. Interacts with capsid protein VP1 and capsid protein VP3. In terms of assembly, homodimer. As to quaternary structure, homohexamer; forms a hexameric ring structure with 6-fold symmetry characteristic of AAA+ ATPases. Interacts (via N-terminus) with host RTN3 (via reticulon domain); this interaction is important for viral replication. Interacts with capsid protein VP3; this interaction may be important for virion morphogenesis. Interacts with protein 3CD. In terms of assembly, homodimer. Interacts with host GBF1. Interacts (via GOLD domain) with host ACBD3 (via GOLD domain); this interaction allows the formation of a viral protein 3A/ACBD3 heterotetramer with a 2:2 stoichiometry, which will stimulate the recruitment of host PI4KB in order to synthesize PI4P at the viral RNA replication sites. As to quaternary structure, interacts with RNA-directed RNA polymerase. Interacts with protein 3AB and with RNA-directed RNA polymerase. In terms of assembly, interacts with Viral protein genome-linked and with protein 3CD. The cofactor is Mg(2+). In terms of processing, specific enzymatic cleavages in vivo by the viral proteases yield processing intermediates and the mature proteins. Post-translationally, myristoylation is required for the formation of pentamers during virus assembly. Further assembly of 12 pentamers and a molecule of genomic RNA generates the provirion. During virion maturation, immature virions are rendered infectious following cleavage of VP0 into VP4 and VP2. This maturation seems to be an autocatalytic event triggered by the presence of RNA in the capsid and it is followed by a conformational change infectious virion. In terms of processing, myristoylation is required during RNA encapsidation and formation of the mature virus particle. Post-translationally, VPg is uridylylated by the polymerase into VPg-pUpU. This acts as a nucleotide-peptide primer for the genomic RNA replication.

Its subcellular location is the virion. It is found in the host cytoplasm. The protein resides in the host cytoplasmic vesicle membrane. The protein localises to the host nucleus. It catalyses the reaction a ribonucleoside 5'-triphosphate + H2O = a ribonucleoside 5'-diphosphate + phosphate + H(+). It carries out the reaction Selective cleavage of Tyr-|-Gly bond in the picornavirus polyprotein.. The enzyme catalyses RNA(n) + a ribonucleoside 5'-triphosphate = RNA(n+1) + diphosphate. The catalysed reaction is Selective cleavage of Gln-|-Gly bond in the poliovirus polyprotein. In other picornavirus reactions Glu may be substituted for Gln, and Ser or Thr for Gly.. Replication or transcription is subject to high level of random mutations by the nucleotide analog ribavirin. Forms an icosahedral capsid of pseudo T=3 symmetry with capsid proteins VP2 and VP3. The capsid is 300 Angstroms in diameter, composed of 60 copies of each capsid protein and enclosing the viral positive strand RNA genome. Capsid protein VP1 mainly forms the vertices of the capsid. Capsid protein VP1 interacts with host ICAM1 to provide virion attachment to target host cells. This attachment induces virion internalization. Tyrosine kinases are probably involved in the entry process. After binding to its receptor, the capsid undergoes conformational changes. Capsid protein VP1 N-terminus (that contains an amphipathic alpha-helix) and capsid protein VP4 are externalized. Together, they shape a pore in the host membrane through which viral genome is translocated to host cell cytoplasm. After genome has been released, the channel shrinks. Its function is as follows. Forms an icosahedral capsid of pseudo T=3 symmetry with capsid proteins VP2 and VP3. The capsid is 300 Angstroms in diameter, composed of 60 copies of each capsid protein and enclosing the viral positive strand RNA genome. Functionally, lies on the inner surface of the capsid shell. After binding to the host receptor, the capsid undergoes conformational changes. Capsid protein VP4 is released, Capsid protein VP1 N-terminus is externalized, and together, they shape a pore in the host membrane through which the viral genome is translocated into the host cell cytoplasm. In terms of biological role, component of immature procapsids, which is cleaved into capsid proteins VP4 and VP2 after maturation. Allows the capsid to remain inactive before the maturation step. Cysteine protease that cleaves viral polyprotein and specific host proteins. It is responsible for the autocatalytic cleavage between the P1 and P2 regions, which is the first cleavage occurring in the polyprotein. Also cleaves the host translation initiation factor EIF4G1, in order to shut down the capped cellular mRNA translation. Inhibits the host nucleus-cytoplasm protein and RNA trafficking by cleaving host members of the nuclear pores including NUP62 and NUP153. Counteracts stress granule formation probably by antagonizing its assembly or promoting its dissassembly. Its function is as follows. Plays an essential role in the virus replication cycle by acting as a viroporin. Creates a pore in the host endoplasmic reticulum and as a consequence releases Ca2+ in the cytoplasm of infected cell. In turn, high levels of cytoplasmic calcium may trigger membrane trafficking and transport of viral ER-associated proteins to viroplasms, sites of viral genome replication. Functionally, induces and associates with structural rearrangements of intracellular membranes. Displays RNA-binding, nucleotide binding and NTPase activities. May play a role in virion morphogenesis and viral RNA encapsidation by interacting with the capsid protein VP3. In terms of biological role, localizes the viral replication complex to the surface of membranous vesicles. Together with protein 3CD binds the Cis-Active RNA Element (CRE) which is involved in RNA synthesis initiation. Acts as a cofactor to stimulate the activity of 3D polymerase, maybe through a nucleid acid chaperone activity. Localizes the viral replication complex to the surface of membranous vesicles. It inhibits host cell endoplasmic reticulum-to-Golgi apparatus transport and causes the disassembly of the Golgi complex, possibly through GBF1 interaction. This would result in depletion of MHC, trail receptors and IFN receptors at the host cell surface. Plays an essential role in viral RNA replication by recruiting ACBD3 and PI4KB at the viral replication sites, thereby allowing the formation of the rearranged membranous structures where viral replication takes place. Its function is as follows. Acts as a primer for viral RNA replication and remains covalently bound to viral genomic RNA. VPg is uridylylated prior to priming replication into VPg-pUpU. The oriI viral genomic sequence may act as a template for this. The VPg-pUpU is then used as primer on the genomic RNA poly(A) by the RNA-dependent RNA polymerase to replicate the viral genome. During genome replication, the VPg-RNA linkage is removed by the host TDP2, thereby accelerating replication. During the late stage of the replication cycle, host TDP2 is excluded from sites of viral RNA synthesis and encapsidation, allowing for the generation of progeny virions. Functionally, involved in the viral replication complex and viral polypeptide maturation. It exhibits protease activity with a specificity and catalytic efficiency that is different from protease 3C. Protein 3CD lacks polymerase activity. Protein 3CD binds to the 5'UTR of the viral genome. In terms of biological role, major viral protease that mediates proteolytic processing of the polyprotein. Cleaves host EIF5B, contributing to host translation shutoff. Cleaves also host PABPC1, contributing to host translation shutoff. Cleaves host NLRP1, triggers host N-glycine-mediated degradation of the autoinhibitory NLRP1 N-terminal fragment. Replicates the viral genomic RNA on the surface of intracellular membranes. May form linear arrays of subunits that propagate along a strong head-to-tail interaction called interface-I. Covalently attaches UMP to a tyrosine of VPg, which is used to prime RNA synthesis. The positive stranded RNA genome is first replicated at virus induced membranous vesicles, creating a dsRNA genomic replication form. This dsRNA is then used as template to synthesize positive stranded RNA genomes. ss(+)RNA genomes are either translated, replicated or encapsidated. In Homo sapiens (Human), this protein is Genome polyprotein.